Reading from the N-terminus, the 426-residue chain is Meiotically up-regulated gene 170 protein (426 aa).

The protein belongs to the arrestin family.

It is found in the cytoplasm. It localises to the nucleus. Has a role in meiosis. The polypeptide is Meiotically up-regulated gene 170 protein (mug170) (Schizosaccharomyces pombe (strain 972 / ATCC 24843) (Fission yeast)).